The sequence spans 253 residues: E3 ubiquitin-protein ligase MARCHF3 (253 aa).

The segment at 63–123 adopts an RING-CH-type zinc-finger fold; that stretch reads SPFNDRPMCR…ELCHFRFAVE (61 aa). 8 residues coordinate Zn(2+): cysteine 71, cysteine 74, cysteine 87, cysteine 89, histidine 97, cysteine 100, cysteine 113, and cysteine 116. Transmembrane regions (helical) follow at residues 145–165 and 182–202; these read LFGD…SGWL and AVGL…WTLV. Residues serine 237 and serine 243 each carry the phosphoserine modification.

Interacts with MARCHF2 and STX6. As to expression, expressed predominantly in lung, colon and spleen. Present in liver (at protein level).

It localises to the cytoplasmic vesicle membrane. It is found in the early endosome membrane. The catalysed reaction is S-ubiquitinyl-[E2 ubiquitin-conjugating enzyme]-L-cysteine + [acceptor protein]-L-lysine = [E2 ubiquitin-conjugating enzyme]-L-cysteine + N(6)-ubiquitinyl-[acceptor protein]-L-lysine.. It functions in the pathway protein modification; protein ubiquitination. In terms of biological role, E3 ubiquitin-protein ligase which may be involved in endosomal trafficking. E3 ubiquitin ligases accept ubiquitin from an E2 ubiquitin-conjugating enzyme in the form of a thioester and then directly transfer the ubiquitin to targeted substrates. The polypeptide is E3 ubiquitin-protein ligase MARCHF3 (Marchf3) (Rattus norvegicus (Rat)).